A 300-amino-acid polypeptide reads, in one-letter code: Acetylglutamate kinase (300 aa).

Substrate is bound by residues 69 to 70 (GG), Arg-91, and Asn-197.

Belongs to the acetylglutamate kinase family. ArgB subfamily.

The protein resides in the cytoplasm. The enzyme catalyses N-acetyl-L-glutamate + ATP = N-acetyl-L-glutamyl 5-phosphate + ADP. It participates in amino-acid biosynthesis; L-arginine biosynthesis; N(2)-acetyl-L-ornithine from L-glutamate: step 2/4. In terms of biological role, catalyzes the ATP-dependent phosphorylation of N-acetyl-L-glutamate. The protein is Acetylglutamate kinase of Kineococcus radiotolerans (strain ATCC BAA-149 / DSM 14245 / SRS30216).